The primary structure comprises 331 residues: Inner membrane ABC transporter permease protein YjfF (331 aa).

At 1 to 5 (MIKRN) the chain is on the cytoplasmic side. Residues 6–26 (LPLMITIGVFVLGYLYCLTQF) traverse the membrane as a helical segment. The Periplasmic segment spans residues 27–42 (PGFASTRVICNILTDN). The helical transmembrane segment at 43 to 63 (AFLGIIAVGMTFVILSGGIDL) threads the bilayer. The Cytoplasmic portion of the chain corresponds to 64–88 (SVGSVIAFTGVFLAKVIGDFGLSPL). Residues 89–109 (LAFPLVLVMGCAFGAFMGLLI) traverse the membrane as a helical segment. Residues 110–113 (DALK) are Periplasmic-facing. Residues 114-134 (IPAFIITLAGMFFLRGVSYLV) form a helical membrane-spanning segment. Residues 135 to 159 (SEESIPINHPIYDTLSSLAWKIPGG) lie on the Cytoplasmic side of the membrane. Residues 160 to 180 (GRLSAMGLLMLAVVVIGIFLA) traverse the membrane as a helical segment. At 181–222 (HRTRFGNQVYAIGGNATSANLMGISTRSTTIRIYMLSTGLAT) the chain is on the periplasmic side. A helical transmembrane segment spans residues 223 to 243 (LAGIVFSIYTQAGYALAGVGV). The Cytoplasmic portion of the chain corresponds to 244–250 (ELDAIAS). Residues 251 to 271 (VVIGGTLLSGGVGTVLGTLFG) form a helical membrane-spanning segment. The Periplasmic portion of the chain corresponds to 272-294 (VAIQGLIQTYINFDGTLSSWWTK). The helical transmembrane segment at 295-315 (IAIGILLFIFIALQRGLTVLW) threads the bilayer. The Cytoplasmic segment spans residues 316 to 331 (ENRQSSPVTRVNIAQQ).

This sequence belongs to the binding-protein-dependent transport system permease family. AraH/RbsC subfamily. In terms of assembly, the complex is composed of two ATP-binding proteins (YtfR), two transmembrane proteins (YtfT and YjfF) and a solute-binding protein (YtfQ).

It is found in the cell inner membrane. In terms of biological role, part of the ABC transporter complex YtfQRT-YjfF involved in galactofuranose transport. Probably responsible for the translocation of the substrate across the membrane. The chain is Inner membrane ABC transporter permease protein YjfF (yjfF) from Escherichia coli (strain K12).